Consider the following 63-residue polypeptide: Conotoxin TeAr193 (63 aa).

The signal sequence occupies residues 1–22 (MRCLPVFVILLLLIASAPSVDA). The propeptide occupies 23–48 (QPKTKDDIPQASFLDNAKRYLQVLES).

The protein belongs to the conotoxin T superfamily. Post-translationally, contains 2 disulfide bonds that can be either 'C1-C3, C2-C4' or 'C1-C4, C2-C3', since these disulfide connectivities have been observed for conotoxins with cysteine framework V (for examples, see AC P0DQQ7 and AC P81755). As to expression, expressed by the venom duct.

It is found in the secreted. This is Conotoxin TeAr193 from Conus textile (Cloth-of-gold cone).